A 957-amino-acid chain; its full sequence is Dystrophin-related protein 2 (957 aa).

Spectrin repeat units lie at residues 102–179 and 231–337; these read DHSG…EELE and EHLL…QLQD. Residues 358–383 enclose the WW domain; sequence WERAISPNKVPYYINHQAQTTCWDHP. Residues 605-661 form a ZZ-type; degenerate zinc finger; it reads KHQTKCSICRQCPIKGFRYRSLKQFNVDICQTCFLTGKASKGNKLHYPIMEYYTPTT. Zn(2+) is bound by residues C610, C613, C634, and C637. A Phosphoserine modification is found at S748. Residues 877–894 show a composition bias toward low complexity; the sequence is PPTESDGNGSAGSSLASS. The disordered stretch occupies residues 877–923; the sequence is PPTESDGNGSAGSSLASSPRQSEGSHPREKGQTTPDTEAADDVGSKS. A Phosphothreonine modification is found at T910.

As to quaternary structure, interacts with PRX; this enhances phosphorylation. Identified in a dystroglycan complex that contains at least PRX, DRP2, UTRN, DMD and DAG1. As to expression, detected in trigeminal nerve Schwann cells. Detected in brain cortex and hippocampus. Detected in brain membrane fractions and highly enriched in the postsynaptic density (at protein level).

The protein localises to the postsynaptic density. It localises to the cell projection. It is found in the dendrite. Its subcellular location is the perikaryon. The protein resides in the cell membrane. Required for normal myelination and for normal organization of the cytoplasm and the formation of Cajal bands in myelinating Schwann cells. Required for normal PRX location at appositions between the abaxonal surface of the myelin sheath and the Schwann cell plasma membrane. Possibly involved in membrane-cytoskeleton interactions of the central nervous system. This is Dystrophin-related protein 2 (Drp2) from Rattus norvegicus (Rat).